Here is a 60-residue protein sequence, read N- to C-terminus: Large ribosomal subunit protein bL32 (60 aa).

The protein belongs to the bacterial ribosomal protein bL32 family.

The sequence is that of Large ribosomal subunit protein bL32 from Borreliella afzelii (strain PKo) (Borrelia afzelii).